A 492-amino-acid polypeptide reads, in one-letter code: MTASDTVYLFQSLADRSKNPQERSLFRNYISEALELLRETPSSPTVVHEQCFRFLANSCSDNNENRAAFFNLGGIDVLKPYCSKDNEYSALAFAVIHNCILDSREYRAQVADAQILNLAITYWIDWQHKLKAPFFNMLSFVCEMLYPFCKDCSLVFMGLQLLPSMVREGIDPFTIFAKAFDNSLVCVSFAQNPSMLIDSIDLVRNMPDFTKKTDMLNLFPRIAEHDAVLSTSLHADPQFLDFLESCFRSDDSNSITMASLFIGNLVRRDDIAKQLMQKDFLNMLISCIMQEKDVDGNVERVYACCAALRHFMIPVSSRAHFAPTAILLQEKLASSRFTQLHYISASMIRLSMPYILCELADHPERFYKLKDWSKSPDFNLALESNRTLLGFVKHYLTVPKSKEKISAFFKNNINLFEESVVTVLSTESKYPIVIGEAVFVAILMIKHGYANVAQTIIASPVYEALKSYRDDPNLAYQLKQNVRSLLVLVEHR.

The protein resides in the cytoplasm. It is found in the nucleus. Probably acts as a GEF (guanine nucleotide exchange factor) for the Rho family of small GTP-binding proteins (G proteins) that stimulates the dissociation of GDP to enable subsequent binding of GTP. May also chaperone the processing and/or trafficking of small GTPases independently of GEF activity. May be involved in the control of polarized cell growth via CDC42-mediated signaling. May also be involved in the control of cell-wall organization via RHO1-mediated signaling. This chain is GTPase-GDP dissociation stimulator arz1, found in Schizosaccharomyces pombe (strain 972 / ATCC 24843) (Fission yeast).